The chain runs to 445 residues: Homogentisate 1,2-dioxygenase (445 aa).

Lysine 98 is subject to N6-acetyllysine. Fe cation-binding residues include histidine 335, glutamate 341, and histidine 371. Lysine 414 carries the N6-succinyllysine modification.

This sequence belongs to the homogentisate dioxygenase family. Homohexamer arranged as a dimer of trimers. Fe cation serves as cofactor.

The catalysed reaction is homogentisate + O2 = 4-maleylacetoacetate + H(+). It functions in the pathway amino-acid degradation; L-phenylalanine degradation; acetoacetate and fumarate from L-phenylalanine: step 4/6. Its function is as follows. Catalyzes the conversion of homogentisate to maleylacetoacetate. In Mus musculus (Mouse), this protein is Homogentisate 1,2-dioxygenase (Hgd).